Reading from the N-terminus, the 162-residue chain is Endoribonuclease YbeY (162 aa).

3 residues coordinate Zn(2+): His126, His130, and His136.

The protein belongs to the endoribonuclease YbeY family. Requires Zn(2+) as cofactor.

The protein resides in the cytoplasm. Its function is as follows. Single strand-specific metallo-endoribonuclease involved in late-stage 70S ribosome quality control and in maturation of the 3' terminus of the 16S rRNA. This Fusobacterium nucleatum subsp. nucleatum (strain ATCC 25586 / DSM 15643 / BCRC 10681 / CIP 101130 / JCM 8532 / KCTC 2640 / LMG 13131 / VPI 4355) protein is Endoribonuclease YbeY.